We begin with the raw amino-acid sequence, 148 residues long: Nucleoside diphosphate kinase 1 (148 aa).

Residues Lys-9, Phe-57, Arg-85, Thr-91, Arg-102, and Asn-112 each contribute to the ATP site. The Pros-phosphohistidine intermediate role is filled by His-115.

It belongs to the NDK family. It depends on Mg(2+) as a cofactor.

The enzyme catalyses a 2'-deoxyribonucleoside 5'-diphosphate + ATP = a 2'-deoxyribonucleoside 5'-triphosphate + ADP. It carries out the reaction a ribonucleoside 5'-diphosphate + ATP = a ribonucleoside 5'-triphosphate + ADP. Major role in the synthesis of nucleoside triphosphates other than ATP. The ATP gamma phosphate is transferred to the NDP beta phosphate via a ping-pong mechanism, using a phosphorylated active-site intermediate. The chain is Nucleoside diphosphate kinase 1 from Nicotiana tabacum (Common tobacco).